Here is a 335-residue protein sequence, read N- to C-terminus: Trans-1,2-dihydrobenzene-1,2-diol dehydrogenase (335 aa).

The protein belongs to the Gfo/Idh/MocA family. In terms of assembly, homodimer. Liver, lens, spleen, kidney and small intestine.

It carries out the reaction (1R,2R)-1,2-dihydrobenzene-1,2-diol + NADP(+) = catechol + NADPH + H(+). The catalysed reaction is D-xylose + NADP(+) = D-xylono-1,5-lactone + NADPH + H(+). Strongly inhibited by isoascorbic acid, 4-hydroxyacetophenone and chloromercuriphenylsulphonate. Stimulated by various salts. The sequence is that of Trans-1,2-dihydrobenzene-1,2-diol dehydrogenase (DHDH) from Sus scrofa (Pig).